The chain runs to 427 residues: UPF0597 protein CPF_0803 (427 aa).

The protein belongs to the UPF0597 family.

This is UPF0597 protein CPF_0803 from Clostridium perfringens (strain ATCC 13124 / DSM 756 / JCM 1290 / NCIMB 6125 / NCTC 8237 / Type A).